Here is a 689-residue protein sequence, read N- to C-terminus: Glycine--tRNA ligase beta subunit (689 aa).

This sequence belongs to the class-II aminoacyl-tRNA synthetase family. Tetramer of two alpha and two beta subunits.

The protein localises to the cytoplasm. It catalyses the reaction tRNA(Gly) + glycine + ATP = glycyl-tRNA(Gly) + AMP + diphosphate. The protein is Glycine--tRNA ligase beta subunit of Salmonella heidelberg (strain SL476).